A 740-amino-acid polypeptide reads, in one-letter code: Elongation factor 2 (740 aa).

Residues 23-264 (AQIRNAGTLA…MIIEHIPPPN (242 aa)) enclose the tr-type G domain. GTP-binding positions include 32–39 (AHVDHGKT), 98–102 (DTPGH), and 152–155 (NKID). The residue at position 605 (His-605) is a Diphthamide.

This sequence belongs to the TRAFAC class translation factor GTPase superfamily. Classic translation factor GTPase family. EF-G/EF-2 subfamily.

It is found in the cytoplasm. Functionally, catalyzes the GTP-dependent ribosomal translocation step during translation elongation. During this step, the ribosome changes from the pre-translocational (PRE) to the post-translocational (POST) state as the newly formed A-site-bound peptidyl-tRNA and P-site-bound deacylated tRNA move to the P and E sites, respectively. Catalyzes the coordinated movement of the two tRNA molecules, the mRNA and conformational changes in the ribosome. The chain is Elongation factor 2 from Pyrobaculum aerophilum (strain ATCC 51768 / DSM 7523 / JCM 9630 / CIP 104966 / NBRC 100827 / IM2).